A 699-amino-acid chain; its full sequence is Protein phosphatase 1 regulatory subunit 37 (699 aa).

Positions 1–12 (MEIPPQEAPPGP) are enriched in pro residues. A disordered region spans residues 1–42 (MEIPPQEAPPGPGADGEAEEAPVEAPSPGPASPPADGRLKAA). 2 positions are modified to phosphoserine: Ser-50 and Ser-56. 5 LRR repeats span residues 220–240 (SLAV…MLLA), 248–269 (TLRE…AQLG), 277–297 (SLQI…AYIC), 306–326 (GLAT…AFLG), and 334–354 (SLET…RNLK). Residues 467–667 (RLQLSASMPE…PPGPEAKVGS (201 aa)) form a disordered region. A compositionally biased stretch (acidic residues) spans 510–525 (SDSDSDSEGEDRDEAD). At Ser-566 the chain carries Phosphoserine. 2 stretches are compositionally biased toward pro residues: residues 588–613 (PPVP…PFPT) and 622–642 (DPGP…PPLP).

This sequence belongs to the PPP1R37 family. Interacts with PPP1CA.

In terms of biological role, inhibits phosphatase activity of protein phosphatase 1 (PP1) complexes. The polypeptide is Protein phosphatase 1 regulatory subunit 37 (PPP1R37) (Bos taurus (Bovine)).